Here is a 430-residue protein sequence, read N- to C-terminus: Dihydrolipoyllysine-residue acetyltransferase component of pyruvate dehydrogenase complex (430 aa).

In terms of domain architecture, Lipoyl-binding spans 2–77; that stretch reads AFEFRLPDIG…VVGDVIVKID (76 aa). Lys43 carries the N6-lipoyllysine modification. The tract at residues 80 to 122 is disordered; sequence DAEDMQFKGHDDDSSSKEEPAKEEAPAEQAPVATQTEEVDENR. Residues 84–104 show a composition bias toward basic and acidic residues; it reads MQFKGHDDDSSSKEEPAKEEA. Residues 125–162 enclose the Peripheral subunit-binding (PSBD) domain; it reads KAMPSVRKYAREKGVNIKAVSGSGKNGRITKEDVDAYL. The disordered stretch occupies residues 164–199; the sequence is GGAPTASNESAASATSEEVAETPAAPAAVSLEGDFP. Over residues 166-193 the composition is skewed to low complexity; it reads APTASNESAASATSEEVAETPAAPAAVS. Residue His401 is part of the active site.

Belongs to the 2-oxoacid dehydrogenase family. Forms a 24-polypeptide structural core with octahedral symmetry. The cofactor is (R)-lipoate.

It catalyses the reaction N(6)-[(R)-dihydrolipoyl]-L-lysyl-[protein] + acetyl-CoA = N(6)-[(R)-S(8)-acetyldihydrolipoyl]-L-lysyl-[protein] + CoA. In terms of biological role, the pyruvate dehydrogenase complex catalyzes the overall conversion of pyruvate to acetyl-CoA and CO(2). It contains multiple copies of three enzymatic components: pyruvate dehydrogenase (E1), dihydrolipoamide acetyltransferase (E2) and lipoamide dehydrogenase (E3). The sequence is that of Dihydrolipoyllysine-residue acetyltransferase component of pyruvate dehydrogenase complex (pdhC) from Staphylococcus aureus (strain Mu50 / ATCC 700699).